A 232-amino-acid chain; its full sequence is YlmG homolog protein 1-1, chloroplastic (232 aa).

The transit peptide at 1-16 (MAAITALTLRSPVYLP) directs the protein to the chloroplast. 2 helical membrane passes run 147-167 (LTVV…VLMV) and 201-221 (IIPP…AVLG).

The protein belongs to the YggT family.

The protein resides in the plastid. It is found in the chloroplast thylakoid membrane. Its function is as follows. Required for the proper distribution of nucleoids in chloroplasts. The nucleoid partitioning by YLMG1-1 may be related to chloroplast division processes. The chain is YlmG homolog protein 1-1, chloroplastic from Arabidopsis thaliana (Mouse-ear cress).